Consider the following 155-residue polypeptide: Microsomal glutathione S-transferase 1 (155 aa).

Residues 3 to 9 are Lumenal-facing; sequence DLRQLMD. A helical transmembrane segment spans residues 10–33; the sequence is NEVLMAFTSYATIILTKMMFMSSA. At 34-62 the chain is on the cytoplasmic side; it reads TAFQRITNKVFANPEDCAGFGKGENAKKF. R38 lines the glutathione pocket. Residues K42, K55, and K60 each carry the N6-acetyllysine modification. The chain crosses the membrane as a helical span at residues 63 to 96; sequence VRTDEKVERVRRAHLNDLENIVPFLGIGLLYSLS. Residues R73, R74, H76, and E81 each contribute to the glutathione site. The Lumenal segment spans residues 97-99; that stretch reads GPD. Residues 100–123 traverse the membrane as a helical segment; the sequence is LSTALMHFRIFVGARIYHTIAYLT. Y121 contacts glutathione. Over 124 to 128 the chain is Cytoplasmic; the sequence is PLPQP. The chain crosses the membrane as a helical span at residues 129–148; sequence NRGLAFFVGYGVTLSMAYRL. Residues 149–155 are Lumenal-facing; that stretch reads LRSRLYL.

This sequence belongs to the MAPEG family. Homotrimer; The trimer binds only one molecule of glutathione. Acetylation of Lys-42 and Lys-55 is observed in liver mitochondria from fasted mice but not from fed mice. Expressed in the testes (at protein level).

It localises to the endoplasmic reticulum membrane. The protein localises to the mitochondrion outer membrane. The catalysed reaction is RX + glutathione = an S-substituted glutathione + a halide anion + H(+). In terms of biological role, conjugation of reduced glutathione to a wide number of exogenous and endogenous hydrophobic electrophiles. In Mus musculus (Mouse), this protein is Microsomal glutathione S-transferase 1 (Mgst1).